We begin with the raw amino-acid sequence, 59 residues long: Small EDRK-rich factor 2 (59 aa).

2 stretches are compositionally biased toward basic and acidic residues: residues 1 to 30 and 50 to 59; these read MTRGNQRELARQKNMKKQSDSVKGKRRDDG and KANEKKEEPK. A disordered region spans residues 1–59; it reads MTRGNQRELARQKNMKKQSDSVKGKRRDDGLSAAARKQRDSEIMQQKQKKANEKKEEPK.

Belongs to the SERF family.

Functionally, positive regulator of amyloid protein aggregation and proteotoxicity. Induces conformational changes in amyloid proteins, such as HTT, driving them into compact formations preceding the formation of aggregates. This chain is Small EDRK-rich factor 2 (SERF2), found in Plecturocebus moloch (Dusky titi monkey).